The sequence spans 248 residues: Acetylglutamate kinase (248 aa).

Substrate-binding positions include 41-42 (GG), arginine 63, and asparagine 155.

Belongs to the acetylglutamate kinase family. ArgB subfamily.

It localises to the cytoplasm. The enzyme catalyses N-acetyl-L-glutamate + ATP = N-acetyl-L-glutamyl 5-phosphate + ADP. The protein operates within amino-acid biosynthesis; L-arginine biosynthesis; N(2)-acetyl-L-ornithine from L-glutamate: step 2/4. Catalyzes the ATP-dependent phosphorylation of N-acetyl-L-glutamate. The chain is Acetylglutamate kinase from Lactiplantibacillus plantarum (strain ATCC BAA-793 / NCIMB 8826 / WCFS1) (Lactobacillus plantarum).